Here is a 398-residue protein sequence, read N- to C-terminus: MKNNYDILIIGGGPAGALAAKTAAEAGNTVCLIEKRAAIGTPVRCAEGIGKELLKEFIKPDPRWIAADIERARIISPNGTAISLEQDRAGNEVGYVLDRKIFDRELVWQAAEAGADVIVKTRATAPIMENGAVRGAKVLSVGIPADIRAEVVIAADGTEAQFARRAGLDTVVPLREMMSCAQYLMTDIDIDAGSTDFYLGNEIAPEGYLWVFPKGNRTANVGIGISGRKSRDGSRAKDYLDRFVAKNFPNGKTIEAIAGGVPVCRPLACTVADGLMVAGDAARVVDPITGGGIGNAMYTGRLAAQVASKCIAAGDCSKEALMPYDAEWRASKMGTVLERNYKVKEYFVTLDDAKLNTLAESIAQSSLKEFSVLGLIKELIKRNPKLLLELKALKDTLS.

10 residues coordinate FAD: Ala15, Glu34, Cys45, Ala46, Gly48, Arg99, Ala123, Asp280, Gly292, and Ile293. Val372 provides a ligand contact to a 2,3-bis-O-(geranylgeranyl)-sn-glycerol 1-phospholipid.

Belongs to the geranylgeranyl reductase family. DGGGPL reductase subfamily. The cofactor is FAD.

The catalysed reaction is a 2,3-bis-O-phytanyl-sn-glycerol 1-phospholipid + 8 oxidized 2[4Fe-4S]-[ferredoxin] = a 2,3-bis-O-(geranylgeranyl)-sn-glycerol 1-phospholipid + 8 reduced 2[4Fe-4S]-[ferredoxin] + 16 H(+). It carries out the reaction 2,3-bis-O-(phytanyl)-sn-glycerol 1-phosphate + 8 oxidized 2[4Fe-4S]-[ferredoxin] = 2,3-bis-O-(geranylgeranyl)-sn-glycerol 1-phosphate + 8 reduced 2[4Fe-4S]-[ferredoxin] + 16 H(+). The enzyme catalyses a 2,3-bis-O-phytanyl-sn-glycerol 1-phospholipid + 8 A = a 2,3-bis-O-(geranylgeranyl)-sn-glycerol 1-phospholipid + 8 AH2. It catalyses the reaction CDP-2,3-bis-O-(geranylgeranyl)-sn-glycerol + 8 AH2 = CDP-2,3-bis-O-(phytanyl)-sn-glycerol + 8 A. The catalysed reaction is archaetidylserine + 8 AH2 = 2,3-bis-O-phytanyl-sn-glycero-3-phospho-L-serine + 8 A. Its pathway is membrane lipid metabolism; glycerophospholipid metabolism. In terms of biological role, is involved in the reduction of 2,3-digeranylgeranylglycerophospholipids (unsaturated archaeols) into 2,3-diphytanylglycerophospholipids (saturated archaeols) in the biosynthesis of archaeal membrane lipids. Catalyzes the formation of archaetidic acid (2,3-di-O-phytanyl-sn-glyceryl phosphate) from 2,3-di-O-geranylgeranylglyceryl phosphate (DGGGP) via the hydrogenation of each double bond of the isoprenoid chains. Is also probably able to reduce double bonds of geranyl groups in CDP-2,3-bis-O-(geranylgeranyl)-sn-glycerol and archaetidylserine, thus acting at various stages in the biosynthesis of archaeal membrane lipids. The polypeptide is Digeranylgeranylglycerophospholipid reductase (Methanoculleus marisnigri (strain ATCC 35101 / DSM 1498 / JR1)).